Consider the following 797-residue polypeptide: Peroxisome proliferator-activated receptor gamma coactivator 1-alpha (797 aa).

Lysine 77 carries the post-translational modification N6-acetyllysine. Residues 101–138 form a disordered region; that stretch reads EDGLPSFDALTDGAVTTDNEASPSSMPDGTPPPQEAEE. Polar residues predominate over residues 114–127; it reads AVTTDNEASPSSMP. An LXXLL motif motif is present at residues 142–146; that stretch reads LKKLL. Lysine 144 carries the N6-acetyllysine modification. Threonine 177 is modified (phosphothreonine; by AMPK). Lysine 183 is subject to N6-acetyllysine. The disordered stretch occupies residues 212–276; that stretch reads YLTTNDDPPH…NDPKGSPFEN (65 aa). Over residues 218-236 the composition is skewed to basic and acidic residues; sequence DPPHTKPTENRNSSRDKCA. Over residues 243–259 the composition is skewed to polar residues; sequence TQPQSQHAQAKPTTLSL. Residues lysine 253, lysine 270, lysine 277, lysine 320, lysine 346, lysine 412, lysine 441, and lysine 450 each carry the N6-acetyllysine modification. Positions 289–376 are disordered; sequence GTAGLTPPTT…HEERKTKRPS (88 aa). The tract at residues 292–338 is interaction with PPARG; that stretch reads GLTPPTTPPHKANQDNPFKASPKLKPSCKTVVPPPTKRARYSECSGT. The mediates interaction with RNF34 stretch occupies residues 349–797; it reads EQSELYAQLS…LKEAQRSLRR (449 aa). Serine 538 carries the phosphoserine; by AMPK modification. Disordered stretches follow at residues 543-598, 612-634, and 648-668; these read NSPC…SSRS, HRNSPLYVRSRSRSPYSRRPRYD, and EYRKEHEKRESERAKQRERQK. Residues 562-577 are compositionally biased toward basic residues; it reads QRMRSRSRSFSRHRSC. The segment covering 578–598 has biased composition (low complexity); that stretch reads SRSPYSRSRSRSPGSRSSSRS. Residues 621-630 are compositionally biased toward basic residues; that stretch reads SRSRSPYSRR. The RRM domain occupies 676–752; it reads RVIYVGKIRP…TDFELYFCGR (77 aa). N6-acetyllysine occurs at positions 757 and 778.

In terms of assembly, homooligomer. Interacts with MYBBP1A; inhibits MYBBP1A transcriptional activation. Interacts with PRDM16, LPIN1 and PML. Interacts (via LXXLL motif) with RORA and RORC (via AF-2 motif); activates RORA and RORC transcriptional activation. Interacts with LRPPRC. Interacts with FOXO1. Interacts with NR5A2. Post-translationally, phosphorylation by AMPK in skeletal muscle increases activation of its own promoter. Phosphorylated by CLK2. In terms of processing, heavily acetylated by KAT2A/GCN5 under conditions of high nutrients, leading to inactivation of PPARGC1A. Deacetylated by SIRT1 in low nutrients/high NAD conditions, leading to its activation. Ubiquitinated. Ubiquitination by RNF34 induces proteasomal degradation. As to expression, white quadriceps and red tibialis anterior (TA) muscles, liver, kidney and brown adipose tissue (at protein level). Skeletal muscle, brown adipose tissue, heart, kidney and brain.

It is found in the nucleus. Its subcellular location is the PML body. In terms of biological role, transcriptional coactivator for steroid receptors and nuclear receptors. Greatly increases the transcriptional activity of PPARG and thyroid hormone receptor on the uncoupling protein promoter. Can regulate key mitochondrial genes that contribute to the program of adaptive thermogenesis. Plays an essential role in metabolic reprogramming in response to dietary availability through coordination of the expression of a wide array of genes involved in glucose and fatty acid metabolism. Acts as a key regulator of gluconeogenesis: stimulates hepatic gluconeogenesis by increasing the expression of gluconeogenic enzymes, and acting together with FOXO1 to promote the fasting gluconeogenic program. Induces the expression of PERM1 in the skeletal muscle in an ESRRA-dependent manner. Also involved in the integration of the circadian rhythms and energy metabolism. Required for oscillatory expression of clock genes, such as BMAL1 and NR1D1, through the coactivation of RORA and RORC, and metabolic genes, such as PDK4 and PEPCK. The chain is Peroxisome proliferator-activated receptor gamma coactivator 1-alpha (Ppargc1a) from Mus musculus (Mouse).